Reading from the N-terminus, the 265-residue chain is Capsule polysaccharide export inner-membrane protein CtrC (265 aa).

The next 6 membrane-spanning stretches (helical) occupy residues 37-57 (IGFL…VLMW), 64-84 (NVSA…MMMW), 121-141 (IAGA…IGWI), 147-167 (IFYM…LGLV), 178-198 (FGKV…VFFF), and 236-256 (NPWY…AVVA). One can recognise an ABC transmembrane type-2 domain in the interval 37-258 (IGFLWLFVEP…LLGLAVVARF (222 aa)).

This sequence belongs to the ABC-2 integral membrane protein family.

It localises to the cell inner membrane. Its function is as follows. May form an ATP-driven capsule polysaccharide export apparatus, in association with the CtrB and CtrD proteins. This chain is Capsule polysaccharide export inner-membrane protein CtrC (ctrC), found in Neisseria meningitidis serogroup A / serotype 4A (strain DSM 15465 / Z2491).